The following is a 201-amino-acid chain: Probable GTP-binding protein EngB (201 aa).

The 176-residue stretch at 22–197 (TFPEYAFIGR…LNYIESINKE (176 aa)) folds into the EngB-type G domain. Residues 30–37 (GRSNVGKS), 57–61 (GKTML), 75–78 (DLPG), 142–145 (TKAD), and 175–178 (ITSS) each bind GTP. 2 residues coordinate Mg(2+): Ser37 and Thr59.

Belongs to the TRAFAC class TrmE-Era-EngA-EngB-Septin-like GTPase superfamily. EngB GTPase family. It depends on Mg(2+) as a cofactor.

In terms of biological role, necessary for normal cell division and for the maintenance of normal septation. This Bacteroides fragilis (strain YCH46) protein is Probable GTP-binding protein EngB.